Consider the following 642-residue polypeptide: Fork head protein homolog 2 (642 aa).

The disordered stretch occupies residues 1–23 (MTVRRLESKSEHISDDEERKEQL). The 65-residue stretch at 96 to 160 (IILGREPANP…NGIKVDGKLF (65 aa)) folds into the FHA domain. Residues 223 to 318 (KPPYSYSVMI…AKTRKTPRKR (96 aa)) constitute a DNA-binding region (fork-head). Positions 310-319 (KTRKTPRKRS) are enriched in basic residues. 3 disordered regions span residues 310–392 (KTRK…ETYK), 519–574 (VSDS…TEEN), and 586–642 (ATME…KSSA). Phosphoserine is present on residues S319, S321, S322, S334, and S336. Residues 348 to 362 (TSIPAAEPASSTTSA) are compositionally biased toward low complexity. 3 stretches are compositionally biased toward polar residues: residues 363–381 (RDQT…TAET), 519–552 (VSDS…SANK), and 599–642 (TPTS…KSSA). A phosphoserine mark is found at S375, S535, and S626.

Phosphorylated. Occurs periodically during mitosis.

It is found in the nucleus. Its function is as follows. Required for promoter sequence element PCB-driven, M-phase-specific transcription. Acts as a transcriptional activator with a role in the regulation of mitosis. Binds, cooperatively with mcm1, the CLB cluster regulatory elements throughout the cell cycle. Regulates the periodic transcription of cdc15 and spo12. Required for the correct timing, positioning and contraction of the division septum. The polypeptide is Fork head protein homolog 2 (fkh2) (Schizosaccharomyces pombe (strain 972 / ATCC 24843) (Fission yeast)).